A 185-amino-acid chain; its full sequence is Adenylyl-sulfate kinase (185 aa).

ATP is bound at residue 13-20 (GLSGAGKS). The Phosphoserine intermediate role is filled by Ser-86.

Belongs to the APS kinase family.

It carries out the reaction adenosine 5'-phosphosulfate + ATP = 3'-phosphoadenylyl sulfate + ADP + H(+). It functions in the pathway sulfur metabolism; hydrogen sulfide biosynthesis; sulfite from sulfate: step 2/3. In terms of biological role, catalyzes the synthesis of activated sulfate. The chain is Adenylyl-sulfate kinase from Myxococcus xanthus (strain DK1622).